An 88-amino-acid polypeptide reads, in one-letter code: UPF0250 protein Sama_2593 (88 aa).

Belongs to the UPF0250 family.

The protein is UPF0250 protein Sama_2593 of Shewanella amazonensis (strain ATCC BAA-1098 / SB2B).